Here is a 265-residue protein sequence, read N- to C-terminus: Neutrophil elastase (265 aa).

The first 26 residues, 1 to 26 (MALGRLSSRTLAAMLLALFLGGPALA), serve as a signal peptide directing secretion. In terms of domain architecture, Peptidase S1 spans 29–247 (IVGGRPARPH…FADWINSIIR (219 aa)). An intrachain disulfide couples Cys-54 to Cys-70. Active-site charge relay system residues include His-69 and Asp-116. N-linked (GlcNAc...) asparagine glycosylation is found at Asn-123 and Asn-172. Disulfide bonds link Cys-150–Cys-208, Cys-180–Cys-187, and Cys-198–Cys-223. Ser-202 serves as the catalytic Charge relay system.

Belongs to the peptidase S1 family. Elastase subfamily. In terms of assembly, interacts with NOTCH2NL.

The enzyme catalyses Hydrolysis of proteins, including elastin. Preferential cleavage: Val-|-Xaa &gt; Ala-|-Xaa.. Functionally, serine protease that modifies the functions of natural killer cells, monocytes and granulocytes. Inhibits C5a-dependent neutrophil enzyme release and chemotaxis. Promotes blood coagulation. Through the activation of the platelet fibrinogen receptor integrin alpha-IIb/beta-3, potentiates platelet aggregation induced by a threshold concentration of cathepsin G (CTSG). Cleaves and thus inactivates tissue factor pathway inhibitor (TFPI). Capable of killing E.coli; probably digests outer membrane protein A (ompA) in E.coli. This chain is Neutrophil elastase (Elane), found in Mus musculus (Mouse).